A 193-amino-acid polypeptide reads, in one-letter code: Bcl-2-like protein 2 (193 aa).

An N-acetylalanine modification is found at Ala2. Positions 9-29 (DTRALVADFVGYKLRQKGYVC) match the BH4 motif. Residues 85 to 104 (ELFQGGPNWGRLVAFFVFGA) carry the BH1 motif. The BH2 signature appears at 136–151 (DWIHSSGGWAEFTALY).

It belongs to the Bcl-2 family. In terms of assembly, interacts with HIF3A isoform 2 (via C-terminus domain). Interacts with BOP. As to expression, expressed in almost all myeloid cell lines and in a wide range of tissues, with highest levels in brain, colon, and salivary gland.

It localises to the mitochondrion membrane. In terms of biological role, promotes cell survival. Blocks dexamethasone-induced apoptosis. Mediates survival of postmitotic Sertoli cells by suppressing death-promoting activity of BAX. The polypeptide is Bcl-2-like protein 2 (Bcl2l2) (Mus musculus (Mouse)).